Consider the following 273-residue polypeptide: Putative pyruvate, phosphate dikinase regulatory protein (273 aa).

Glycine 149–threonine 156 lines the ADP pocket.

Belongs to the pyruvate, phosphate/water dikinase regulatory protein family. PDRP subfamily.

It catalyses the reaction N(tele)-phospho-L-histidyl/L-threonyl-[pyruvate, phosphate dikinase] + ADP = N(tele)-phospho-L-histidyl/O-phospho-L-threonyl-[pyruvate, phosphate dikinase] + AMP + H(+). It carries out the reaction N(tele)-phospho-L-histidyl/O-phospho-L-threonyl-[pyruvate, phosphate dikinase] + phosphate + H(+) = N(tele)-phospho-L-histidyl/L-threonyl-[pyruvate, phosphate dikinase] + diphosphate. Functionally, bifunctional serine/threonine kinase and phosphorylase involved in the regulation of the pyruvate, phosphate dikinase (PPDK) by catalyzing its phosphorylation/dephosphorylation. The polypeptide is Putative pyruvate, phosphate dikinase regulatory protein (Rickettsia akari (strain Hartford)).